Reading from the N-terminus, the 263-residue chain is uncharacterized protein (263 aa).

Residue 13–20 (TGSTSGIG) participates in NADP(+) binding. Serine 141 provides a ligand contact to substrate. Residue tyrosine 154 is the Proton acceptor of the active site.

The protein belongs to the short-chain dehydrogenases/reductases (SDR) family.

This is an uncharacterized protein from Bacillus subtilis (strain 168).